The primary structure comprises 476 residues: UDP-N-acetylmuramate--L-alanine ligase (476 aa).

115-121 (GTHGKTT) contributes to the ATP binding site.

The protein belongs to the MurCDEF family.

Its subcellular location is the cytoplasm. The catalysed reaction is UDP-N-acetyl-alpha-D-muramate + L-alanine + ATP = UDP-N-acetyl-alpha-D-muramoyl-L-alanine + ADP + phosphate + H(+). It participates in cell wall biogenesis; peptidoglycan biosynthesis. Functionally, cell wall formation. This Paramagnetospirillum magneticum (strain ATCC 700264 / AMB-1) (Magnetospirillum magneticum) protein is UDP-N-acetylmuramate--L-alanine ligase.